The sequence spans 689 residues: Beta-adrenergic receptor kinase 1 (689 aa).

The tract at residues 1–190 (MADLEAVLAD…ELNIHLTMND (190 aa)) is N-terminal. An RGS domain is found at 54-175 (TFEKIFSQKL…IESEKFTRFC (122 aa)). One can recognise a Protein kinase domain in the interval 191–453 (FSVHRIIGRG…AQEVKEDPFF (263 aa)). ATP contacts are provided by residues 197-205 (IGRGGFGEV) and lysine 220. Aspartate 317 acts as the Proton acceptor in catalysis. Residues 454–521 (KAVDWQMVLL…TISERWQQEV (68 aa)) form the AGC-kinase C-terminal domain. A PH domain is found at 558–652 (DCIMHGYMSK…WKKELRDVYR (95 aa)). The disordered stretch occupies residues 665-689 (KNKPRSPVVELSKMPLTQRGSANGL). Serine 670 bears the Phosphoserine mark.

The protein belongs to the protein kinase superfamily. AGC Ser/Thr protein kinase family. GPRK subfamily. As to quaternary structure, interacts with the heterodimer formed by GNB1 and GNG2. Interacts with GIT1. Interacts with, and phosphorylates chemokine-stimulated CCR5. Interacts with ARRB1. Interacts with LPAR1 and LPAR2. Interacts with RALA in response to LPAR1 activation. ADRBK1 and RALA mutually inhibit each other's binding to LPAR1. Interacts with ADRB2.

It localises to the cytoplasm. Its subcellular location is the cell membrane. The protein localises to the postsynapse. It is found in the presynapse. It catalyses the reaction [beta-adrenergic receptor] + ATP = [beta-adrenergic receptor]-phosphate + ADP + H(+). Its activity is regulated as follows. In contrast to other AGC family kinases, the catalytic activity is solely regulated by the binding of substrates and ligands, not by phosphorylation of the kinase domain. Specifically phosphorylates the agonist-occupied form of the beta-adrenergic and closely related receptors, probably inducing a desensitization of them. Does not act on HTR1B/5-hydroxytryptamine 1B receptor. Key regulator of LPAR1 signaling. Competes with RALA for binding to LPAR1 thus affecting the signaling properties of the receptor. Desensitizes LPAR1 and LPAR2 in a phosphorylation-independent manner. Inhibits relaxation of airway smooth muscle in response to blue light. In Didelphis virginiana (North American opossum), this protein is Beta-adrenergic receptor kinase 1.